Here is a 350-residue protein sequence, read N- to C-terminus: Glycerol-1-phosphate dehydrogenase [NAD(P)+] (350 aa).

Residues glycine 94 to aspartate 98 and threonine 116 to serine 119 each bind NAD(+). Aspartate 121 is a substrate binding site. Serine 125 contributes to the NAD(+) binding site. Residue aspartate 168 coordinates substrate. Positions 168 and 248 each coordinate Zn(2+). Histidine 252 is a substrate binding site. Residue histidine 264 participates in Zn(2+) binding.

Belongs to the glycerol-1-phosphate dehydrogenase family. Requires Zn(2+) as cofactor.

It is found in the cytoplasm. It catalyses the reaction sn-glycerol 1-phosphate + NAD(+) = dihydroxyacetone phosphate + NADH + H(+). The enzyme catalyses sn-glycerol 1-phosphate + NADP(+) = dihydroxyacetone phosphate + NADPH + H(+). The protein operates within membrane lipid metabolism; glycerophospholipid metabolism. Functionally, catalyzes the NAD(P)H-dependent reduction of dihydroxyacetonephosphate (DHAP or glycerone phosphate) to glycerol 1-phosphate (G1P). The G1P thus generated is used as the glycerophosphate backbone of phospholipids in the cellular membranes of Archaea. The protein is Glycerol-1-phosphate dehydrogenase [NAD(P)+] of Halorubrum lacusprofundi (strain ATCC 49239 / DSM 5036 / JCM 8891 / ACAM 34).